The sequence spans 575 residues: Dihydroxy-acid dehydratase (575 aa).

The interval 1–27 is disordered; that stretch reads MSNQERQERPEKDPDLRSTEVTEGYEK. Cys-61 is a [2Fe-2S] cluster binding site. Asp-93 is a binding site for Mg(2+). Cys-134 is a [2Fe-2S] cluster binding site. Positions 135 and 136 each coordinate Mg(2+). Lys-136 carries the post-translational modification N6-carboxylysine. Position 206 (Cys-206) interacts with [2Fe-2S] cluster. Position 460 (Glu-460) interacts with Mg(2+). Residue Ser-486 is the Proton acceptor of the active site.

The protein belongs to the IlvD/Edd family. As to quaternary structure, homodimer. The cofactor is [2Fe-2S] cluster. Mg(2+) is required as a cofactor.

The enzyme catalyses (2R)-2,3-dihydroxy-3-methylbutanoate = 3-methyl-2-oxobutanoate + H2O. The catalysed reaction is (2R,3R)-2,3-dihydroxy-3-methylpentanoate = (S)-3-methyl-2-oxopentanoate + H2O. Its pathway is amino-acid biosynthesis; L-isoleucine biosynthesis; L-isoleucine from 2-oxobutanoate: step 3/4. It functions in the pathway amino-acid biosynthesis; L-valine biosynthesis; L-valine from pyruvate: step 3/4. Its function is as follows. Functions in the biosynthesis of branched-chain amino acids. Catalyzes the dehydration of (2R,3R)-2,3-dihydroxy-3-methylpentanoate (2,3-dihydroxy-3-methylvalerate) into 2-oxo-3-methylpentanoate (2-oxo-3-methylvalerate) and of (2R)-2,3-dihydroxy-3-methylbutanoate (2,3-dihydroxyisovalerate) into 2-oxo-3-methylbutanoate (2-oxoisovalerate), the penultimate precursor to L-isoleucine and L-valine, respectively. This is Dihydroxy-acid dehydratase from Haloarcula marismortui (strain ATCC 43049 / DSM 3752 / JCM 8966 / VKM B-1809) (Halobacterium marismortui).